A 119-amino-acid chain; its full sequence is uncharacterized protein (119 aa).

The next 2 helical transmembrane spans lie at 7-27 (ILHN…LLLV) and 32-52 (YFFE…FLML).

Its subcellular location is the membrane. This is an uncharacterized protein from Saccharomyces cerevisiae (strain ATCC 204508 / S288c) (Baker's yeast).